The chain runs to 105 residues: Thioredoxin-like protein slr0233 (105 aa).

A Thioredoxin domain is found at 1-102 (MAVKKQFANF…QAAQLIQQLQ (102 aa)). A disulfide bridge connects residues Cys30 and Cys33.

It belongs to the thioredoxin family.

The protein is Thioredoxin-like protein slr0233 of Synechocystis sp. (strain ATCC 27184 / PCC 6803 / Kazusa).